A 186-amino-acid polypeptide reads, in one-letter code: Threonylcarbamoyl-AMP synthase (186 aa).

The region spanning 3–186 (ILSLSECVDR…IINGSLIRHG (184 aa)) is the YrdC-like domain.

Belongs to the SUA5 family. TsaC subfamily.

The protein resides in the cytoplasm. The catalysed reaction is L-threonine + hydrogencarbonate + ATP = L-threonylcarbamoyladenylate + diphosphate + H2O. Functionally, required for the formation of a threonylcarbamoyl group on adenosine at position 37 (t(6)A37) in tRNAs that read codons beginning with adenine. Catalyzes the conversion of L-threonine, HCO(3)(-)/CO(2) and ATP to give threonylcarbamoyl-AMP (TC-AMP) as the acyladenylate intermediate, with the release of diphosphate. The polypeptide is Threonylcarbamoyl-AMP synthase (Buchnera aphidicola subsp. Baizongia pistaciae (strain Bp)).